The sequence spans 490 residues: Betaine aldehyde dehydrogenase (490 aa).

Serine 26, isoleucine 27, and aspartate 93 together coordinate K(+). 150–152 contributes to the NAD(+) binding site; sequence GAW. Residue lysine 162 is the Charge relay system of the active site. 176–179 serves as a coordination point for NAD(+); the sequence is KPSE. Valine 180 lines the K(+) pocket. Residue 230-233 coordinates NAD(+); sequence GVAT. Leucine 246 lines the K(+) pocket. Glutamate 252 (proton acceptor) is an active-site residue. Positions 254, 286, and 387 each coordinate NAD(+). The active-site Nucleophile is cysteine 286. At cysteine 286 the chain carries Cysteine sulfenic acid (-SOH). K(+)-binding residues include lysine 457 and glycine 460. Glutamate 464 functions as the Charge relay system in the catalytic mechanism.

Belongs to the aldehyde dehydrogenase family. As to quaternary structure, dimer of dimers. K(+) is required as a cofactor.

The enzyme catalyses betaine aldehyde + NAD(+) + H2O = glycine betaine + NADH + 2 H(+). It functions in the pathway amine and polyamine biosynthesis; betaine biosynthesis via choline pathway; betaine from betaine aldehyde: step 1/1. Its function is as follows. Involved in the biosynthesis of the osmoprotectant glycine betaine. Catalyzes the irreversible oxidation of betaine aldehyde to the corresponding acid. The chain is Betaine aldehyde dehydrogenase from Stutzerimonas stutzeri (strain A1501) (Pseudomonas stutzeri).